A 955-amino-acid polypeptide reads, in one-letter code: MQSSLIKILGVLAIVATLVCFVFAALGMIGAVSVGNGCYMRYAPGGKGGSDSITSTITLNANANYVNTSTMLPDGTMQLTPDPAHYGEWLNTQVEVKDKQAVSLQVVGQISLCLAYVPKDNLQFTESTRPGKSNLDDNGKMIPIPRVTDVNKPPLSLIMDAKNNEWRNITEMYANDRILVSVTPNYSPGAGGTVGAMDAFKGTNVTADCSQGKTAYDPICGRYSIYSGPYVNACELKQNYWQGNKKQKCPNGCVWGTIDWCYTAPSAWCTYYYVCDSLSAWVNNYGTMPEPYKDDGTFTFSWASNSGGIFIDYANLQCSNNINIPPNGKCPDSVDDRSPKDKDYIGGAGCTSGVCNGGEFQSQRRFWYTSDGNGGKGPTGLIWQISNTSNVDSTLPSTLQFAQFVTASDQPTEYGNEYKVIYNIPFNSNTDKGYLQYRLWCPTSQDASKNTGGYVMNIKQTKCYRENGNSLTDVFNNRGQVQYLVVPSAENPNTSGKNYSPEAAIVDSKGKANFNAAGEGYIWMRVLNDPNDYKDSEGSYKVHFSTSQSVGSFTIKVMNPLLQLFKGKVKGAAESIFRNIVCYGGDTSSCTNFFNYIKALLILYVMVYGAMFLLGFAKINQKDLVVRIVKIGIVSGLMNGNTFEFFNNYLFDTIANFSDEIISNMSGYSLFNSNGTVSNPFMFLDAVMSRILFSQTFMAQLLALLSLGLSGIIYFIITVIAVMIVIITAFRAAAVYIMAFMATCILIGIAPIFISFLLFDFTRYLFDNWVRFTIRYMIEPVVLMAGIIVLTQLFTIYLDFVLGYSVCWKCALPIKIPFIGTILPVALLNVPIFCINWFAPWGMDYMSGMMGVNMQNIVALVIIAYGMYGYVEFSGNMVARLTSAAGPSATSMGGAMSGAAEQGALSQVGMDEKTRKGITGRAKERLKQRNETLKQAEKTRKNAPKEEPPKAEIPK.

Positions 1 to 24 (MQSSLIKILGVLAIVATLVCFVFA) are cleaved as a signal peptide. The tract at residues 127–146 (STRPGKSNLDDNGKMIPIPR) is disordered. Helical transmembrane passes span 597 to 617 (IKALLILYVMVYGAMFLLGFA), 707 to 727 (LGLSGIIYFIITVIAVMIVII), 739 to 759 (AFMATCILIGIAPIFISFLLF), 781 to 801 (VVLMAGIIVLTQLFTIYLDFV), 818 to 838 (FIGTILPVALLNVPIFCINWF), and 857 to 877 (IVALVIIAYGMYGYVEFSGNM). Positions 905 to 955 (LSQVGMDEKTRKGITGRAKERLKQRNETLKQAEKTRKNAPKEEPPKAEIPK) are disordered. The segment covering 910–955 (MDEKTRKGITGRAKERLKQRNETLKQAEKTRKNAPKEEPPKAEIPK) has biased composition (basic and acidic residues).

This sequence belongs to the TrbL/VirB6 family.

It is found in the cell membrane. This is an uncharacterized protein from Rickettsia bellii (strain RML369-C).